The following is a 100-amino-acid chain: Putative protein BCL8 (100 aa).

Expressed in prostate and testis.

This chain is Putative protein BCL8 (NBEAP1), found in Homo sapiens (Human).